The chain runs to 400 residues: Elongation factor Tu (400 aa).

A tr-type G domain is found at 10–209 (KPHVNIGTIG…NVDAYIPTPE (200 aa)). A G1 region spans residues 19-26 (GHVDHGKT). 19 to 26 (GHVDHGKT) serves as a coordination point for GTP. Thr-26 contributes to the Mg(2+) binding site. Residues 60–64 (GITIN) form a G2 region. Residues 81–84 (DCPG) form a G3 region. Residues 81–85 (DCPGH) and 136–139 (NKSD) each bind GTP. Residues 136–139 (NKSD) form a G4 region. The segment at 174–176 (SGL) is G5.

Belongs to the TRAFAC class translation factor GTPase superfamily. Classic translation factor GTPase family. EF-Tu/EF-1A subfamily. In terms of assembly, monomer.

It is found in the cytoplasm. It carries out the reaction GTP + H2O = GDP + phosphate + H(+). GTP hydrolase that promotes the GTP-dependent binding of aminoacyl-tRNA to the A-site of ribosomes during protein biosynthesis. The chain is Elongation factor Tu from Desulforamulus reducens (strain ATCC BAA-1160 / DSM 100696 / MI-1) (Desulfotomaculum reducens).